We begin with the raw amino-acid sequence, 228 residues long: MALLILLRHGQSVWNEKNLFSGWVDIPLSQQGIEEAFSAGRAIQNLPIDCIFTSTLVRSLMTALLAMTNHHSKKIPYIVHEDPKAKEMSRIYSAEEENNMIPLYQSSALNERMYGELQGKNKKQTAEQFGEERVKLWRRSYKTAPPQGESLYDTKQRTLPYFEKNILPQLQNGKNVFVSAHGNSLRSLIMDLEKLSEEEVLSLELPTGKPVVYQWKNHKIEKHPEFFG.

Residues 8–15, 21–22, arginine 58, 111–114, lysine 122, 138–139, and 182–183 contribute to the substrate site; these read RHGQSVWN, SG, ERMY, RR, and GN. Histidine 9 serves as the catalytic Tele-phosphohistidine intermediate. Residue glutamate 111 is the Proton donor/acceptor of the active site.

The protein belongs to the phosphoglycerate mutase family. BPG-dependent PGAM subfamily.

The catalysed reaction is (2R)-2-phosphoglycerate = (2R)-3-phosphoglycerate. The protein operates within carbohydrate degradation; glycolysis; pyruvate from D-glyceraldehyde 3-phosphate: step 3/5. Catalyzes the interconversion of 2-phosphoglycerate and 3-phosphoglycerate. In Chlamydia pneumoniae (Chlamydophila pneumoniae), this protein is 2,3-bisphosphoglycerate-dependent phosphoglycerate mutase.